A 356-amino-acid polypeptide reads, in one-letter code: S-adenosylmethionine:tRNA ribosyltransferase-isomerase (356 aa).

The protein belongs to the QueA family. Monomer.

It localises to the cytoplasm. The enzyme catalyses 7-aminomethyl-7-carbaguanosine(34) in tRNA + S-adenosyl-L-methionine = epoxyqueuosine(34) in tRNA + adenine + L-methionine + 2 H(+). It participates in tRNA modification; tRNA-queuosine biosynthesis. Functionally, transfers and isomerizes the ribose moiety from AdoMet to the 7-aminomethyl group of 7-deazaguanine (preQ1-tRNA) to give epoxyqueuosine (oQ-tRNA). The polypeptide is S-adenosylmethionine:tRNA ribosyltransferase-isomerase (Xanthomonas oryzae pv. oryzae (strain KACC10331 / KXO85)).